Here is a 558-residue protein sequence, read N- to C-terminus: MRKIRANAIAILTVAWILGTFYYLWQDNRAHAASSSGRGAQRAGGRPEQLREDRTIPLIVTGTPSKGFDEKAYLSAKQLKPGEDPYRQHAFNQLESDKLSSDRPIRDTRHYSCPSLSYSSDLPATSVIITFHNEARSTLLRTVKSVLNRTPASLIQEIILVDDFSSDPEDCLLLTRIPKVKCLRNDKREGLIRSRVRGADVAGATVLTFLDSHCEVNVEWLQPMLQRVMEDHTRVVSPIIDVISLDNFAYLAASADLRGGFDWSLHFKWEQIPLEQKMTRTDPTKPIRTPVIAGGIFVIDKSWFNHLGKYDAQMDIWGGENFELSFRVWMCGGSLEIVPCSRVGHVFRKRHPYNFPEGNALTYIRNTKRTAEVWMDEYKQYYYEARPSAIGKAFGSVATRIEQRKKMDCKSFRWYLENVYPELTVPVKEVLPGVIKQGVNCLESQGQNTAGDLLLGMGICRGSAKSPPPAQAWLFSDHLIQQQGKCLAATSTLMSSPGSPVILQTCNPKEGKQKWRRKGSFIQHSVSGLCLETKPAQLVTSKCQTDAQAQQWQLLPHT.

The Cytoplasmic segment spans residues 1 to 6 (MRKIRA). Residues 7–26 (NAIAILTVAWILGTFYYLWQ) form a helical; Signal-anchor for type II membrane protein membrane-spanning segment. Over 27–558 (DNRAHAASSS…AQQWQLLPHT (532 aa)) the chain is Lumenal. Positions 34 to 46 (SSSGRGAQRAGGR) are enriched in low complexity. The interval 34–53 (SSSGRGAQRAGGRPEQLRED) is disordered. 5 disulfides stabilise this stretch: Cys-113/Cys-340, Cys-331/Cys-409, Cys-441/Cys-460, Cys-486/Cys-506, and Cys-530/Cys-543. A catalytic subdomain A region spans residues 122–227 (LPATSVIITF…VEWLQPMLQR (106 aa)). The substrate site is built by Asp-163 and Arg-188. Residue Asp-211 participates in Mn(2+) binding. Residue Ser-212 participates in substrate binding. Residue His-213 coordinates Mn(2+). Residues 286–348 (PIRTPVIAGG…PCSRVGHVFR (63 aa)) are catalytic subdomain B. Substrate is bound at residue Trp-317. Mn(2+) is bound at residue His-345. Positions 348, 351, and 353 each coordinate substrate. The 128-residue stretch at 428–555 (KEVLPGVIKQ…DAQAQQWQLL (128 aa)) folds into the Ricin B-type lectin domain.

It belongs to the glycosyltransferase 2 family. GalNAc-T subfamily. Mn(2+) is required as a cofactor. In the CNS, it is predominantly expressed in several distinct hypothalamic, thalamic and amygdaloid nuclei. The most abundant level of expression is in the paraventricular, ventromedial and arcuate nuclei of the hypothalamus, the anterodorsal and parafascicular nuclei of the thalamus and the central, basomedial and medial nuclei of the amygdala. Also expressed in cerebral cortex, lateral septum, habenula and hippocampus.

It is found in the golgi apparatus membrane. The enzyme catalyses L-seryl-[protein] + UDP-N-acetyl-alpha-D-galactosamine = a 3-O-[N-acetyl-alpha-D-galactosaminyl]-L-seryl-[protein] + UDP + H(+). The catalysed reaction is L-threonyl-[protein] + UDP-N-acetyl-alpha-D-galactosamine = a 3-O-[N-acetyl-alpha-D-galactosaminyl]-L-threonyl-[protein] + UDP + H(+). It participates in protein modification; protein glycosylation. In terms of biological role, catalyzes the initial reaction in O-linked oligosaccharide biosynthesis, the transfer of an N-acetyl-D-galactosamine residue to a serine or threonine residue on the protein receptor. In Mus musculus (Mouse), this protein is Polypeptide N-acetylgalactosaminyltransferase 16 (Galnt16).